A 245-amino-acid polypeptide reads, in one-letter code: 1-(5-phosphoribosyl)-5-[(5-phosphoribosylamino)methylideneamino] imidazole-4-carboxamide isomerase (245 aa).

The Proton acceptor role is filled by Asp7. Asp129 acts as the Proton donor in catalysis.

It belongs to the HisA/HisF family.

It localises to the cytoplasm. It catalyses the reaction 1-(5-phospho-beta-D-ribosyl)-5-[(5-phospho-beta-D-ribosylamino)methylideneamino]imidazole-4-carboxamide = 5-[(5-phospho-1-deoxy-D-ribulos-1-ylimino)methylamino]-1-(5-phospho-beta-D-ribosyl)imidazole-4-carboxamide. The protein operates within amino-acid biosynthesis; L-histidine biosynthesis; L-histidine from 5-phospho-alpha-D-ribose 1-diphosphate: step 4/9. The chain is 1-(5-phosphoribosyl)-5-[(5-phosphoribosylamino)methylideneamino] imidazole-4-carboxamide isomerase from Shewanella baltica (strain OS223).